Reading from the N-terminus, the 214-residue chain is Probable septum site-determining protein MinC (214 aa).

The protein belongs to the MinC family. In terms of assembly, interacts with MinD and FtsZ.

Functionally, cell division inhibitor that blocks the formation of polar Z ring septums. Rapidly oscillates between the poles of the cell to destabilize FtsZ filaments that have formed before they mature into polar Z rings. Prevents FtsZ polymerization. This chain is Probable septum site-determining protein MinC, found in Caldanaerobacter subterraneus subsp. tengcongensis (strain DSM 15242 / JCM 11007 / NBRC 100824 / MB4) (Thermoanaerobacter tengcongensis).